A 340-amino-acid chain; its full sequence is Probable dual-specificity RNA methyltransferase RlmN (340 aa).

Residue E91 is the Proton acceptor of the active site. The 230-residue stretch at 97–326 (HSGRVTACIS…CEIRKEKGTD (230 aa)) folds into the Radical SAM core domain. Residues C104 and C331 are joined by a disulfide bond. [4Fe-4S] cluster is bound by residues C111, C115, and C118. S-adenosyl-L-methionine-binding positions include 158–159 (GE), S190, 213–215 (SLH), and N289. C331 functions as the S-methylcysteine intermediate in the catalytic mechanism.

The protein belongs to the radical SAM superfamily. RlmN family. [4Fe-4S] cluster is required as a cofactor.

The protein resides in the cytoplasm. The enzyme catalyses adenosine(2503) in 23S rRNA + 2 reduced [2Fe-2S]-[ferredoxin] + 2 S-adenosyl-L-methionine = 2-methyladenosine(2503) in 23S rRNA + 5'-deoxyadenosine + L-methionine + 2 oxidized [2Fe-2S]-[ferredoxin] + S-adenosyl-L-homocysteine. The catalysed reaction is adenosine(37) in tRNA + 2 reduced [2Fe-2S]-[ferredoxin] + 2 S-adenosyl-L-methionine = 2-methyladenosine(37) in tRNA + 5'-deoxyadenosine + L-methionine + 2 oxidized [2Fe-2S]-[ferredoxin] + S-adenosyl-L-homocysteine. In terms of biological role, specifically methylates position 2 of adenine 2503 in 23S rRNA and position 2 of adenine 37 in tRNAs. The chain is Probable dual-specificity RNA methyltransferase RlmN from Thermosipho melanesiensis (strain DSM 12029 / CIP 104789 / BI429).